The following is a 273-amino-acid chain: DNA repair protein RecO (273 aa).

This sequence belongs to the RecO family.

Involved in DNA repair and RecF pathway recombination. The protein is DNA repair protein RecO of Saccharopolyspora erythraea (strain ATCC 11635 / DSM 40517 / JCM 4748 / NBRC 13426 / NCIMB 8594 / NRRL 2338).